Reading from the N-terminus, the 94-residue chain is Sulfocarbamoylase-1 (94 aa).

As to quaternary structure, homodimer. As to expression, ubiquitous (at protein level). Highest levels of expression in crystalline style followed by digestive gland and mantle.

Strongly inhibited by the serine proteinase inhibitor AEBSF. Weakly inhibited by the proteinase inhibitors BSF and aprotinin, and by EDTA. Not inhibited by the proteinase inhibitors bestatin, E-64 and leupeptin. In terms of biological role, hydrolysis of sulfocarbamoyl esters of paralytic shellfish toxins. Does not hydrolyze the carbamoyl esters of paralytic shellfish toxins. Ester hydrolysis is significantly affected by the stereochemistry of sulfate esters at C-11 of the substrate toxin. The protein is Sulfocarbamoylase-1 of Megangulus venulosus (Japanese bivalve).